The chain runs to 144 residues: Androgenic gland hormone (144 aa).

The first 21 residues, 1-21 (MKGLVILVSLMCLALYNRICA), serve as a signal peptide directing secretion. 4 disulfide bridges follow: Cys33–Cys123, Cys42–Cys59, Cys44–Cys141, and Cys124–Cys132. Residues 68-113 (SAPEDELAFEDYEDQDYFHPRALSIPSEIEHDNEKESDAFSILSRG) constitute a propeptide, c peptide. N-linked (GlcNAc...) (complex) asparagine glycosylation occurs at Asn133.

As to expression, androgenic gland.

The protein localises to the secreted. In terms of biological role, controls sex differentiation and the formation of male appendages, spermatogenesis, pigmentation, and male specific behavior. This chain is Androgenic gland hormone, found in Armadillidium vulgare (Pillbug).